Here is a 507-residue protein sequence, read N- to C-terminus: ATP synthase subunit alpha, chloroplastic (507 aa).

170–177 is a binding site for ATP; it reads GDRQTGKT.

This sequence belongs to the ATPase alpha/beta chains family. In terms of assembly, F-type ATPases have 2 components, CF(1) - the catalytic core - and CF(0) - the membrane proton channel. CF(1) has five subunits: alpha(3), beta(3), gamma(1), delta(1), epsilon(1). CF(0) has four main subunits: a, b, b' and c.

It is found in the plastid. It localises to the chloroplast thylakoid membrane. It carries out the reaction ATP + H2O + 4 H(+)(in) = ADP + phosphate + 5 H(+)(out). In terms of biological role, produces ATP from ADP in the presence of a proton gradient across the membrane. The alpha chain is a regulatory subunit. In Atropa belladonna (Belladonna), this protein is ATP synthase subunit alpha, chloroplastic.